The following is a 1081-amino-acid chain: Protein QUIRKY (1081 aa).

Residues 1–124 form the C2 1 domain; sequence MNTTPFHSDP…SRRGEEGLVY (124 aa). Disordered stretches follow at residues 154–198 and 238–323; these read DTAG…MNIP and PQHV…MEKK. Low complexity predominate over residues 163–176; the sequence is QQQQQQQQFHPPQQ. Residues 248–257 are compositionally biased toward basic and acidic residues; sequence NHPHRNDNHP. Over residues 258–268 the composition is skewed to pro residues; that stretch reads QRPPSPPPPPS. C2 domains are found at residues 318 to 440, 477 to 605, and 652 to 778; these read TTME…PQWY, SSDA…SKWH, and VCSD…TNSY. 4 residues coordinate Ca(2+): E351, S352, D408, and S413. A run of 3 helical transmembrane segments spans residues 879–899, 916–936, and 1024–1044; these read WYRI…LDNI, LVLV…VVMI, and LFIA…AKMV.

It belongs to the MCTP family. As to quaternary structure, interacts with SUB/SCM and POQ at the plasma membrane. Binds to SUB/SCM at plasmodesmata (PD) in root epidermal cells to promote tissue morphogenesis. It depends on Ca(2+) as a cofactor. As to expression, observed mainly in flowers, and, to a lower extent, in seedlings, roots, shoots, leaves, stems and inflorescences. Expressed in the vascular tissues of roots, cotyledons and rosette leaves. Accumulates in roots meristems.

The protein localises to the cell membrane. It is found in the cytoplasm. The protein resides in the golgi apparatus membrane. Its subcellular location is the cell junction. It localises to the plasmodesma. Functionally, may be involved in Ca 2(+)-dependent signaling and membrane trafficking. Plays a role in fruit dehiscence. Components of the machinery involved in organ development mediated by the receptor-like kinase STRUBBELIG (SUB). Collaboratively with SUB and POQ, regulates cell growth anisotropy during gynoecium development, thus linking together cell-cell communication and cellular growth. Together with SUB/SCM, links RLK-dependent signal transduction and intercellular communication mediated by plasmodesmata (PD) to regulate tissue morphogenesis. May function as a signaling molecule by regulating the trafficking of other regulators. The sequence is that of Protein QUIRKY from Arabidopsis thaliana (Mouse-ear cress).